Reading from the N-terminus, the 319-residue chain is NADH-ubiquinone oxidoreductase chain 1 (319 aa).

The next 8 helical transmembrane spans lie at 3-23 (LITLIINPLMYIIPILLAMAF), 74-94 (LFLLTPTLALTLALILWIPLP), 106-126 (ILFILAVSSLSVYSILGSGWA), 149-169 (TLGLIIISLIMFTGGFTLTTF), 175-195 (AVWLILPAWPLAAMWFISTLA), 226-246 (LFFLAEYTNILLMNALSTILF), 254-274 (LTINLNWAIKTMILASMFLWV), and 294-314 (FLPLTLALITWHISLPISMAG).

The protein belongs to the complex I subunit 1 family.

It is found in the mitochondrion inner membrane. It carries out the reaction a ubiquinone + NADH + 5 H(+)(in) = a ubiquinol + NAD(+) + 4 H(+)(out). Core subunit of the mitochondrial membrane respiratory chain NADH dehydrogenase (Complex I) that is believed to belong to the minimal assembly required for catalysis. Complex I functions in the transfer of electrons from NADH to the respiratory chain. The immediate electron acceptor for the enzyme is believed to be ubiquinone. This is NADH-ubiquinone oxidoreductase chain 1 (MT-ND1) from Polypterus ornatipinnis (Ornate bichir).